The following is a 90-amino-acid chain: Lectin-1 (90 aa).

Glutamine 1 carries the pyrrolidone carboxylic acid modification. A disulfide bridge links cysteine 46 with cysteine 71.

The N-terminus is blocked. In terms of processing, contains seven disulfide bonds. Post-translationally, proteolytically cleaved. Major form may consist of cleaved, disulfide-bonded subunits.

In terms of biological role, lectin with specificity for complex N-linked glycans and O-linked glycans. Has hemagglutinating activity towards rabbit erythrocytes that is inhibited by N-acetyl-D-galactosamine. The polypeptide is Lectin-1 (Hypnea cervicornis (Brazilian red alga)).